Reading from the N-terminus, the 336-residue chain is Geranylgeranyl pyrophosphate synthase 6, mitochondrial (336 aa).

The N-terminal 22 residues, 1–22 (MRPRYSLILSAMRLIRPSNRRL), are a transit peptide targeting the mitochondrion. Isopentenyl diphosphate contacts are provided by K80, R83, and H112. D119 and D125 together coordinate Mg(2+). Dimethylallyl diphosphate is bound at residue R130. Isopentenyl diphosphate is bound at residue R131. Dimethylallyl diphosphate is bound by residues K221, T222, Q259, K276, and K286.

Belongs to the FPP/GGPP synthase family. Monomer. It depends on Mg(2+) as a cofactor.

Its subcellular location is the mitochondrion. It catalyses the reaction isopentenyl diphosphate + dimethylallyl diphosphate = (2E)-geranyl diphosphate + diphosphate. The catalysed reaction is isopentenyl diphosphate + (2E)-geranyl diphosphate = (2E,6E)-farnesyl diphosphate + diphosphate. It carries out the reaction isopentenyl diphosphate + (2E,6E)-farnesyl diphosphate = (2E,6E,10E)-geranylgeranyl diphosphate + diphosphate. It functions in the pathway isoprenoid biosynthesis; farnesyl diphosphate biosynthesis; farnesyl diphosphate from geranyl diphosphate and isopentenyl diphosphate: step 1/1. Its pathway is isoprenoid biosynthesis; geranyl diphosphate biosynthesis; geranyl diphosphate from dimethylallyl diphosphate and isopentenyl diphosphate: step 1/1. It participates in isoprenoid biosynthesis; geranylgeranyl diphosphate biosynthesis; geranylgeranyl diphosphate from farnesyl diphosphate and isopentenyl diphosphate: step 1/1. Catalyzes the trans-addition of the three molecules of IPP onto DMAPP to form geranylgeranyl pyrophosphate. This is Geranylgeranyl pyrophosphate synthase 6, mitochondrial from Arabidopsis thaliana (Mouse-ear cress).